The primary structure comprises 213 residues: Large ribosomal subunit protein uL3 (213 aa).

N5-methylglutamine is present on Gln-151.

The protein belongs to the universal ribosomal protein uL3 family. Part of the 50S ribosomal subunit. Forms a cluster with proteins L14 and L19. In terms of processing, methylated by PrmB.

In terms of biological role, one of the primary rRNA binding proteins, it binds directly near the 3'-end of the 23S rRNA, where it nucleates assembly of the 50S subunit. This Allorhizobium ampelinum (strain ATCC BAA-846 / DSM 112012 / S4) (Agrobacterium vitis (strain S4)) protein is Large ribosomal subunit protein uL3.